We begin with the raw amino-acid sequence, 447 residues long: Phospholipase A(1) DAD1, chloroplastic (447 aa).

The transit peptide at 1–46 (MRFSLSPVRPHSVVVPSLPKQDVVSYISGTTSNRQCRCVLTLPSPS) directs the protein to the chloroplast. Positions 293 to 297 (GHSLG) match the GXSXG motif. Ser295 serves as the catalytic Acyl-ester intermediate. Active-site charge relay system residues include Asp352 and His418.

Belongs to the AB hydrolase superfamily. Lipase family. Expressed in flower buds, but not in leaves or roots. Restricted to the stamen filaments immediately before flower opening.

The protein resides in the plastid. Its subcellular location is the chloroplast. It carries out the reaction a 1,2-diacyl-sn-glycero-3-phosphocholine + H2O = a 2-acyl-sn-glycero-3-phosphocholine + a fatty acid + H(+). The catalysed reaction is 1-hexadecanoyl-2-(9Z,12Z-octadecadienoyl)-sn-glycero-3-phosphocholine + H2O = 2-(9Z,12Z-octadecadienoyl)-sn-glycero-3-phosphocholine + hexadecanoate + H(+). Sn-1-specific phospholipase that releases free fatty acids from phospholipids. Low activity on galactolipids and triacylglycerols. Catalyzes the initial step of jasmonic acid biosynthesis. Not essential for jasmonate biosynthesis after wounding or upon pathogen infection. The protein is Phospholipase A(1) DAD1, chloroplastic of Arabidopsis thaliana (Mouse-ear cress).